Reading from the N-terminus, the 47-residue chain is PhoP/PhoQ regulator MgrB (47 aa).

Residues 6 to 26 (WVALVVVVLACLLLWAQVFNM) traverse the membrane as a helical segment.

This sequence belongs to the MgrB family. In terms of assembly, may form homooligomers. Probably interacts with the periplasmic domain of PhoQ.

The protein localises to the cell inner membrane. Its function is as follows. PhoP-regulated transcription is redox-sensitive, being activated when the periplasm becomes more reducing. MgrB acts between DsbA/DsbB and PhoP/PhoQ in this pathway. Represses PhoP/PhoQ signaling, possibly by binding to the periplasmic domain of PhoQ, altering its activity and that of downstream effector PhoP. The protein is PhoP/PhoQ regulator MgrB of Escherichia coli O127:H6 (strain E2348/69 / EPEC).